Reading from the N-terminus, the 276-residue chain is Phospholipid phosphatase 2 (276 aa).

The Cytoplasmic segment spans residues 1–4; it reads MERR. Residues 5 to 25 traverse the membrane as a helical segment; that stretch reads WVFVLLDVLCVLVASLPFIIL. Over 26–51 the chain is Lumenal; that stretch reads TLVNAPYKRGFYCGDDSIRYPYRPDT. A helical membrane pass occupies residues 52–72; the sequence is ITHGLMAGVIITATVVLVSSG. Residues 73-87 are Cytoplasmic-facing; the sequence is EAYLVYTDRLYSRSD. The chain crosses the membrane as a helical span at residues 88-108; sequence FNNYVAAIYKVLGTFLFGAAV. Residues 109 to 161 are Lumenal-facing; sequence SQSLTDLAKYMIGRLRPSFLAVCDPDWSRVNCSGYVQVEVCRGSPANVTEARL. A phosphatase sequence motif I region spans residues 117-125; it reads KYMIGRLRP. Asparagine 139 and asparagine 155 each carry an N-linked (GlcNAc...) asparagine glycan. Residues 162 to 182 traverse the membrane as a helical segment; the sequence is SFYSGHSSFGMYCMLFLALYV. The phosphatase sequence motif II stretch occupies residues 164–167; the sequence is YSGH. Residue histidine 167 is the Proton donors of the active site. The Cytoplasmic segment spans residues 183 to 189; the sequence is QARLCWK. Residues 190–210 traverse the membrane as a helical segment; the sequence is WARLLRPTVQFFLVAFAIYVG. The Lumenal segment spans residues 211 to 225; sequence YTRVSDNKHHWSDVL. The interval 212–223 is phosphatase sequence motif III; sequence TRVSDNKHHWSD. Histidine 219 acts as the Nucleophile in catalysis. A helical transmembrane segment spans residues 226–246; that stretch reads VGLLQGALVACLTVCYVSDFF. The Cytoplasmic portion of the chain corresponds to 247–276; that stretch reads KSRPPQSCQENEESERKPSLSLTLTLGDRP. The interval 252-276 is disordered; it reads QSCQENEESERKPSLSLTLTLGDRP.

It belongs to the PA-phosphatase related phosphoesterase family. As to quaternary structure, forms functional homodimers and homooligomers. Can also form heterooligomers with PLPP1 and PLPP3. In terms of processing, N-glycosylated. In terms of tissue distribution, expressed in the brain.

It localises to the membrane. The protein resides in the cell membrane. The protein localises to the early endosome membrane. Its subcellular location is the endoplasmic reticulum membrane. The catalysed reaction is a 1,2-diacyl-sn-glycero-3-phosphate + H2O = a 1,2-diacyl-sn-glycerol + phosphate. It carries out the reaction 1,2-dihexadecanoyl-sn-glycero-3-phosphate + H2O = 1,2-dihexadecanoyl-sn-glycerol + phosphate. It catalyses the reaction 1,2-di-(9Z-octadecenoyl)-sn-glycero-3-phosphate + H2O = 1,2-di-(9Z-octadecenoyl)-sn-glycerol + phosphate. The enzyme catalyses a monoacyl-sn-glycero-3-phosphate + H2O = a monoacylglycerol + phosphate. The catalysed reaction is (9Z)-octadecenoyl-sn-glycero-3-phosphate + H2O = (9Z-octadecenoyl)-glycerol + phosphate. It carries out the reaction sphing-4-enine 1-phosphate + H2O = sphing-4-enine + phosphate. It catalyses the reaction an N-acylsphing-4-enine 1-phosphate + H2O = an N-acylsphing-4-enine + phosphate. The enzyme catalyses N-(octanoyl)-sphing-4-enine-1-phosphate + H2O = N-octanoylsphing-4-enine + phosphate. The catalysed reaction is N-(9Z-octadecenoyl)-ethanolamine phosphate + H2O = N-(9Z-octadecenoyl) ethanolamine + phosphate. It functions in the pathway lipid metabolism; phospholipid metabolism. With respect to regulation, magnesium-independent phospholipid phosphatase. Insensitive to N-ethylmaleimide. Magnesium-independent phospholipid phosphatase that catalyzes the dephosphorylation of a variety of glycerolipid and sphingolipid phosphate esters including phosphatidate/PA, lysophosphatidate/LPA, sphingosine 1-phosphate/S1P and ceramide 1-phosphate/C1P. Has no apparent extracellular phosphatase activity and therefore most probably acts intracellularly. Also acts on N-oleoyl ethanolamine phosphate/N-(9Z-octadecenoyl)-ethanolamine phosphate, a potential physiological compound. Through dephosphorylation of these bioactive lipid mediators produces new bioactive compounds and may regulate signal transduction in different cellular processes. Indirectly regulates, for instance, cell cycle G1/S phase transition through its phospholipid phosphatase activity. The sequence is that of Phospholipid phosphatase 2 from Rattus norvegicus (Rat).